Consider the following 280-residue polypeptide: Lysosome-associated membrane glycoprotein 5 (280 aa).

Residues M1 to A29 form the signal peptide. Over E30–E235 the chain is Extracellular. N-linked (GlcNAc...) asparagine glycosylation is found at N35, N53, N102, and N127. A helical transmembrane segment spans residues T236–Y256. At H257–G280 the chain is on the cytoplasmic side.

The protein belongs to the LAMP family. Post-translationally, glycosylated. In terms of tissue distribution, in brain, strongly expressed in the globus pallidus/ventral pallidum complex, the substantia nigra pars reticulata and the entopeduncular nucleus (at protein level). Expressed in the external plexiform layer of the olfactory bulb (at protein level). May be weakly expressed in neocortex and striatum (at protein level). Highly expressed in brain; not detected in other tissues tested. Detected in the cingulate cortex, cortical plate and caudate putamen. In neocortex, specifically expressed in neurons of layers II/III and V.

Its subcellular location is the cytoplasmic vesicle membrane. The protein localises to the cell membrane. It localises to the cell projection. The protein resides in the dendrite. It is found in the cytoplasmic vesicle. Its subcellular location is the secretory vesicle. The protein localises to the synaptic vesicle membrane. It localises to the growth cone membrane. The protein resides in the early endosome membrane. It is found in the recycling endosome. Its subcellular location is the endoplasmic reticulum-Golgi intermediate compartment membrane. The protein localises to the endosome membrane. Its function is as follows. Plays a role in short-term synaptic plasticity in a subset of GABAergic neurons in the brain. The sequence is that of Lysosome-associated membrane glycoprotein 5 (Lamp5) from Mus musculus (Mouse).